A 143-amino-acid polypeptide reads, in one-letter code: FAM161 homolog famh-136 (143 aa).

It belongs to the FAM136 family.

Its subcellular location is the cytoplasm. Its function is as follows. May play a role in locomotion and behavior. The polypeptide is FAM161 homolog famh-136 (Caenorhabditis elegans).